The primary structure comprises 432 residues: MAIGDKRKKNRKNKQNKKNKNDNELILLHNTNNKLINSNSLVNSNNKNNNNKNGNGGGVNVMVNQCYNVLNGSFLFGSFFNKFDVLFNYLKSFLTIQKQSLNVNKLTDSNITISQKDNITFSTNSNNNNNSTNGNSNSPSIIIQQQQQHHHFNESQSSNNNNNNGSSLSSLGGSYITVDDLNDQLKIVQLEQKIVNLEKEIQRMRNEQNQIHKQNLNQYHELLKQIINAASLIQQQPTSIIQQPPQPFVAPPPPPPPPPPMVFKPKPIVVQPVSTPSSSSNSLASKKSNGVPQFSISMADITGVKLRKTSSKFAQSNSSPSRVNGSPARNRVVTSPAGIKKSPFKRVLTPVKKSATTTTTSSSSNNATTTTAKGSTSTPLKDITNSNNIKNSVLSPKSITKPNTPSNIIFSPLSNNNNNASPYKPLTISTLR.

The span at 1-18 (MAIGDKRKKNRKNKQNKK) shows a compositional bias: basic residues. Disordered stretches follow at residues 1–23 (MAIGDKRKKNRKNKQNKKNKNDN), 37–56 (NSNSLVNSNNKNNNNKNGNG), and 122–168 (STNS…GSSL). Low complexity-rich tracts occupy residues 37–53 (NSNSLVNSNNKNNNNKN), 122–147 (STNSNNNNNSTNGNSNSPSIIIQQQQ), and 154–168 (ESQSSNNNNNNGSSL). The stretch at 181–226 (LNDQLKIVQLEQKIVNLEKEIQRMRNEQNQIHKQNLNQYHELLKQI) forms a coiled coil. 2 disordered regions span residues 270–290 (VQPVSTPSSSSNSLASKKSNG) and 310–432 (SSKF…STLR). Positions 274-288 (STPSSSSNSLASKKS) are enriched in low complexity. The segment covering 311–324 (SKFAQSNSSPSRVN) has biased composition (polar residues). Positions 352-378 (KKSATTTTTSSSSNNATTTTAKGSTST) are enriched in low complexity. The segment covering 383–414 (ITNSNNIKNSVLSPKSITKPNTPSNIIFSPLS) has biased composition (polar residues).

This is an uncharacterized protein from Dictyostelium discoideum (Social amoeba).